We begin with the raw amino-acid sequence, 169 residues long: Lipoprotein signal peptidase (169 aa).

Transmembrane regions (helical) follow at residues 12-32 (WLWL…WILG), 70-90 (WFFA…MYRS), and 102-122 (AFII…GFVV). Catalysis depends on residues Asp-123 and Asp-141. Residues 137–157 (FNLADSFICVGAAMIVLEGFL) traverse the membrane as a helical segment.

This sequence belongs to the peptidase A8 family.

The protein localises to the cell inner membrane. The catalysed reaction is Release of signal peptides from bacterial membrane prolipoproteins. Hydrolyzes -Xaa-Yaa-Zaa-|-(S,diacylglyceryl)Cys-, in which Xaa is hydrophobic (preferably Leu), and Yaa (Ala or Ser) and Zaa (Gly or Ala) have small, neutral side chains.. The protein operates within protein modification; lipoprotein biosynthesis (signal peptide cleavage). Functionally, this protein specifically catalyzes the removal of signal peptides from prolipoproteins. The sequence is that of Lipoprotein signal peptidase from Serratia proteamaculans (strain 568).